The chain runs to 248 residues: 4-hydroxy-tetrahydrodipicolinate reductase (248 aa).

Asp-28 contacts NAD(+). An NADP(+)-binding site is contributed by Lys-29. NAD(+) contacts are provided by residues 78–80 (ATT) and 102–105 (SYNM). Residue His-134 is the Proton donor/acceptor of the active site. His-135 is a (S)-2,3,4,5-tetrahydrodipicolinate binding site. The active-site Proton donor is Lys-138. 144–145 (GT) provides a ligand contact to (S)-2,3,4,5-tetrahydrodipicolinate.

It belongs to the DapB family.

The protein resides in the cytoplasm. The enzyme catalyses (S)-2,3,4,5-tetrahydrodipicolinate + NAD(+) + H2O = (2S,4S)-4-hydroxy-2,3,4,5-tetrahydrodipicolinate + NADH + H(+). It catalyses the reaction (S)-2,3,4,5-tetrahydrodipicolinate + NADP(+) + H2O = (2S,4S)-4-hydroxy-2,3,4,5-tetrahydrodipicolinate + NADPH + H(+). It participates in amino-acid biosynthesis; L-lysine biosynthesis via DAP pathway; (S)-tetrahydrodipicolinate from L-aspartate: step 4/4. Its function is as follows. Catalyzes the conversion of 4-hydroxy-tetrahydrodipicolinate (HTPA) to tetrahydrodipicolinate. This Exiguobacterium sibiricum (strain DSM 17290 / CCUG 55495 / CIP 109462 / JCM 13490 / 255-15) protein is 4-hydroxy-tetrahydrodipicolinate reductase.